Reading from the N-terminus, the 359-residue chain is MRVLGIETSCDETAAAIVERDDMGEGRILSNLVLSQIAEHEPYGGVVPEIAARAHVEALDRLVDRALNDAGLKLYEVDAVAATAGPGLIGGLIVGLMTAKALAMAAQKPFYAVNHLEGHALTARLTDGLPFPYLLLLVSGGHTQMVLVRGIGDYERLGTTIDDALGEAFDKTAKLLGLPYPGGPAVERMALQGDQKRFALPRPLKGEARLNFSFSGLKTAVRQTATELVPLTDQDVTDICASFQAAVADTLSDRVGRSLERFKTEFPDCATPSLVVAGGVAANKTLRAALENLCTRHGFAFIAPPLNLCTDNAAMIAWAGAERAATQAPDSLDIAPRSRWPLDEKSAPVFGTGRRGAKA.

Residues His-115 and His-119 each coordinate Fe cation. Residues 137 to 141, Asp-170, Gly-183, and Asn-283 each bind substrate; that span reads LVSGG. Residue Asp-311 coordinates Fe cation. The disordered stretch occupies residues 328-359; sequence APDSLDIAPRSRWPLDEKSAPVFGTGRRGAKA.

Belongs to the KAE1 / TsaD family. It depends on Fe(2+) as a cofactor.

It localises to the cytoplasm. It carries out the reaction L-threonylcarbamoyladenylate + adenosine(37) in tRNA = N(6)-L-threonylcarbamoyladenosine(37) in tRNA + AMP + H(+). Functionally, required for the formation of a threonylcarbamoyl group on adenosine at position 37 (t(6)A37) in tRNAs that read codons beginning with adenine. Is involved in the transfer of the threonylcarbamoyl moiety of threonylcarbamoyl-AMP (TC-AMP) to the N6 group of A37, together with TsaE and TsaB. TsaD likely plays a direct catalytic role in this reaction. The polypeptide is tRNA N6-adenosine threonylcarbamoyltransferase (Brucella suis (strain ATCC 23445 / NCTC 10510)).